Consider the following 369-residue polypeptide: Phenylalanine--tRNA ligase alpha subunit (369 aa).

Position 272 (E272) interacts with Mg(2+).

Belongs to the class-II aminoacyl-tRNA synthetase family. Phe-tRNA synthetase alpha subunit type 1 subfamily. In terms of assembly, tetramer of two alpha and two beta subunits. The cofactor is Mg(2+).

The protein localises to the cytoplasm. The catalysed reaction is tRNA(Phe) + L-phenylalanine + ATP = L-phenylalanyl-tRNA(Phe) + AMP + diphosphate + H(+). The protein is Phenylalanine--tRNA ligase alpha subunit of Cutibacterium acnes (strain DSM 16379 / KPA171202) (Propionibacterium acnes).